The following is a 239-amino-acid chain: MDFFSVQNILVHIPIGAGGYDLSWIEAVGTIAGLLCIGLASLEKISNYFFGLINVTLFGIIFFQIQLYASLLLQVFFFAANIYGWYAWSRQTSQNEAELKIRWLPLPKALSWLAVCVVSIGLMTVFINPVFAFLTRVAVMIMQALGLQVVMPELQPDAFPFWDSCMMVLSIVAMILMTRKYVENWLLWVIINVISVVIFALQGVYAMSLEYIILTFIALNGSRMWINSARERGSRALSH.

Topologically, residues 1 to 21 (MDFFSVQNILVHIPIGAGGYD) are cytoplasmic. Residues 22 to 42 (LSWIEAVGTIAGLLCIGLASL) form a helical membrane-spanning segment. Residues 43-48 (EKISNY) are Periplasmic-facing. The helical transmembrane segment at 49 to 68 (FFGLINVTLFGIIFFQIQLY) threads the bilayer. The Cytoplasmic portion of the chain corresponds to 69 to 71 (ASL). A helical membrane pass occupies residues 72–89 (LLQVFFFAANIYGWYAWS). The Periplasmic segment spans residues 90 to 109 (RQTSQNEAELKIRWLPLPKA). The chain crosses the membrane as a helical span at residues 110 to 127 (LSWLAVCVVSIGLMTVFI). Residues 128–157 (NPVFAFLTRVAVMIMQALGLQVVMPELQPD) are Cytoplasmic-facing. A helical transmembrane segment spans residues 158–177 (AFPFWDSCMMVLSIVAMILM). Residues 178-183 (TRKYVE) are Periplasmic-facing. Residues 184 to 206 (NWLLWVIINVISVVIFALQGVYA) form a helical membrane-spanning segment. Beta-nicotinamide D-riboside is bound by residues Trp-188 and Asn-192. Residues 207-239 (MSLEYIILTFIALNGSRMWINSARERGSRALSH) lie on the Cytoplasmic side of the membrane.

The protein belongs to the nicotinamide ribonucleoside (NR) uptake permease (TC 4.B.1) family.

The protein localises to the cell inner membrane. In terms of biological role, required for nicotinamide riboside transport across the inner membrane. The chain is Nicotinamide riboside transporter PnuC (pnuC) from Escherichia coli (strain K12).